Reading from the N-terminus, the 718-residue chain is Catalase-peroxidase (718 aa).

Residues 98–219 constitute a cross-link (tryptophyl-tyrosyl-methioninium (Trp-Tyr) (with M-245)); it reads WHAAGTYRMG…LAATEMGLIY (122 aa). H99 acts as the Proton acceptor in catalysis. The tryptophyl-tyrosyl-methioninium (Tyr-Met) (with W-98) cross-link spans 219 to 245; the sequence is YVNPEGPQASGDPRSAAPFIRATFGNM. Residue H260 participates in heme b binding.

This sequence belongs to the peroxidase family. Peroxidase/catalase subfamily. In terms of assembly, homodimer or homotetramer. Requires heme b as cofactor. In terms of processing, formation of the three residue Trp-Tyr-Met cross-link is important for the catalase, but not the peroxidase activity of the enzyme.

It carries out the reaction H2O2 + AH2 = A + 2 H2O. The enzyme catalyses 2 H2O2 = O2 + 2 H2O. Bifunctional enzyme with both catalase and broad-spectrum peroxidase activity. The chain is Catalase-peroxidase from Acinetobacter baumannii (strain AB307-0294).